Here is a 602-residue protein sequence, read N- to C-terminus: Threonine--tRNA ligase (602 aa).

The segment at Asp-208 to Pro-499 is catalytic. The Zn(2+) site is built by Cys-300, His-351, and His-476.

Belongs to the class-II aminoacyl-tRNA synthetase family. In terms of assembly, homodimer. It depends on Zn(2+) as a cofactor.

It localises to the cytoplasm. It catalyses the reaction tRNA(Thr) + L-threonine + ATP = L-threonyl-tRNA(Thr) + AMP + diphosphate + H(+). Functionally, catalyzes the attachment of threonine to tRNA(Thr) in a two-step reaction: L-threonine is first activated by ATP to form Thr-AMP and then transferred to the acceptor end of tRNA(Thr). Also edits incorrectly charged L-seryl-tRNA(Thr). This Campylobacter jejuni subsp. jejuni serotype O:2 (strain ATCC 700819 / NCTC 11168) protein is Threonine--tRNA ligase.